Consider the following 226-residue polypeptide: Glutathione S-transferase kappa 1 (226 aa).

16-18 (SPY) contributes to the glutathione binding site. N6-succinyllysine is present on residues Lys36 and Lys49. Asn53 is a binding site for glutathione. N6-acetyllysine; alternate is present on residues Lys68 and Lys74. Residues Lys68 and Lys74 each carry the N6-succinyllysine; alternate modification. Lys85 carries the post-translational modification N6-acetyllysine. 2 positions are modified to N6-acetyllysine; alternate: Lys93 and Lys116. Residues Lys93 and Lys116 each carry the N6-succinyllysine; alternate modification. N6-succinyllysine is present on Lys144. Lys158 carries the N6-acetyllysine; alternate modification. N6-succinyllysine; alternate is present on Lys158. At Lys165 the chain carries N6-acetyllysine. N6-acetyllysine; alternate is present on residues Lys167 and Lys177. Lys167 and Lys177 each carry N6-succinyllysine; alternate. Leu183 provides a ligand contact to glutathione. The residue at position 193 (Lys193) is an N6-succinyllysine. 200–201 (SD) contacts glutathione.

The protein belongs to the GST superfamily. Kappa family. In terms of assembly, homodimer.

The protein resides in the mitochondrion matrix. The enzyme catalyses RX + glutathione = an S-substituted glutathione + a halide anion + H(+). Its function is as follows. Glutathione S-transferase that catalyzes the conjugation of glutathione to exogenous and endogenous compounds. In Rattus norvegicus (Rat), this protein is Glutathione S-transferase kappa 1 (Gstk1).